Reading from the N-terminus, the 185-residue chain is Elongation factor P (185 aa).

Belongs to the elongation factor P family.

Its subcellular location is the cytoplasm. The protein operates within protein biosynthesis; polypeptide chain elongation. Its function is as follows. Involved in peptide bond synthesis. Stimulates efficient translation and peptide-bond synthesis on native or reconstituted 70S ribosomes in vitro. Probably functions indirectly by altering the affinity of the ribosome for aminoacyl-tRNA, thus increasing their reactivity as acceptors for peptidyl transferase. The chain is Elongation factor P (efp) from Nostoc sp. (strain PCC 7120 / SAG 25.82 / UTEX 2576).